The chain runs to 110 residues: UPF0060 membrane protein AHA_2410 (110 aa).

The next 4 membrane-spanning stretches (helical) occupy residues 8–28, 33–53, 63–83, and 87–107; these read GLFL…YLWL, SVWL…LLSL, AAYG…VDGI, and LWDL…MFAP.

The protein belongs to the UPF0060 family.

The protein localises to the cell inner membrane. In Aeromonas hydrophila subsp. hydrophila (strain ATCC 7966 / DSM 30187 / BCRC 13018 / CCUG 14551 / JCM 1027 / KCTC 2358 / NCIMB 9240 / NCTC 8049), this protein is UPF0060 membrane protein AHA_2410.